Here is a 351-residue protein sequence, read N- to C-terminus: Uroporphyrinogen decarboxylase (351 aa).

Residues 25–29 (RQAGR), aspartate 74, tyrosine 151, serine 206, and histidine 325 each bind substrate.

Belongs to the uroporphyrinogen decarboxylase family. As to quaternary structure, homodimer.

The protein localises to the cytoplasm. It carries out the reaction uroporphyrinogen III + 4 H(+) = coproporphyrinogen III + 4 CO2. The protein operates within porphyrin-containing compound metabolism; protoporphyrin-IX biosynthesis; coproporphyrinogen-III from 5-aminolevulinate: step 4/4. In terms of biological role, catalyzes the decarboxylation of four acetate groups of uroporphyrinogen-III to yield coproporphyrinogen-III. The polypeptide is Uroporphyrinogen decarboxylase (Chlorobium phaeovibrioides (strain DSM 265 / 1930) (Prosthecochloris vibrioformis (strain DSM 265))).